We begin with the raw amino-acid sequence, 613 residues long: DBH-like monooxygenase protein 1 (613 aa).

An N-terminal signal peptide occupies residues 1 to 19 (MCGWPLLVLWALLPATAAG). At 20–587 (SPGRSYPHRV…PLVCEKAASP (568 aa)) the chain is on the lumenal side. Residues 35–148 (GKYWLHWGRQ…STVRVIWAYH (114 aa)) form the DOMON domain. Residue asparagine 114 is glycosylated (N-linked (GlcNAc...) asparagine). Tyrosine 203 is a catalytic residue. Cystine bridges form between cysteine 205/cysteine 257 and cysteine 242/cysteine 269. The Cu cation site is built by histidine 235 and histidine 236. N-linked (GlcNAc...) asparagine glycosylation is present at asparagine 247. The Cu cation site is built by histidine 307, histidine 389, histidine 391, and methionine 464. Intrachain disulfides connect cysteine 364–cysteine 480, cysteine 368–cysteine 550, and cysteine 443–cysteine 465. The active site involves histidine 389. N-linked (GlcNAc...) asparagine glycans are attached at residues asparagine 476 and asparagine 517. The helical transmembrane segment at 588–608 (PLHGIFSLRLLTCALLLGSML) threads the bilayer.

The protein belongs to the copper type II ascorbate-dependent monooxygenase family. Cu(2+) serves as cofactor. Post-translationally, N-glycosylated. In terms of tissue distribution, broadly exprressed, with highest levels in salivary gland and ovary.

The protein localises to the endoplasmic reticulum membrane. The polypeptide is DBH-like monooxygenase protein 1 (Moxd1) (Mus musculus (Mouse)).